The sequence spans 520 residues: GMP synthase [glutamine-hydrolyzing] (520 aa).

The 194-residue stretch at 9–202 (TVLIVDFGSQ…VHKIAGIKGD (194 aa)) folds into the Glutamine amidotransferase type-1 domain. The active-site Nucleophile is C86. Active-site residues include H176 and E178. Residues 203 to 395 (WTMSAYRAKA…LGLPESFIGR (193 aa)) enclose the GMPS ATP-PPase domain. Residue 230–236 (SGGVDSS) coordinates ATP.

Homodimer.

It catalyses the reaction XMP + L-glutamine + ATP + H2O = GMP + L-glutamate + AMP + diphosphate + 2 H(+). The protein operates within purine metabolism; GMP biosynthesis; GMP from XMP (L-Gln route): step 1/1. In terms of biological role, catalyzes the synthesis of GMP from XMP. The sequence is that of GMP synthase [glutamine-hydrolyzing] from Sinorhizobium fredii (strain NBRC 101917 / NGR234).